The following is a 221-amino-acid chain: Transcription factor MYB1 (221 aa).

HTH myb-type domains follow at residues 1–57 and 58–112; these read MESV…LNYL and RPNI…QKKL. DNA-binding regions (H-T-H motif) lie at residues 33–57 and 85–108; these read WHQV…LNYL and WSLI…NTHL. The disordered stretch occupies residues 126 to 154; sequence KTIVPKGTEAQPRAHPKSPPRPSPPSNNE.

Expressed in stems and leaves. Expressed at low levels in ovaries.

It localises to the nucleus. In terms of biological role, transcription activator involved in the regulation of anthocyanin biosynthesis in red-fleshed kiwifruit varieties. Activates the transcription of genes involved in anthocyanin biosynthesis, such as dihydroflavonol reductase (DFR), anthocyanidin synthase (ANS) and UDP flavonoid glycosyltransferase (UFGT). The polypeptide is Transcription factor MYB1 (Actinidia chinensis var. chinensis (Chinese soft-hair kiwi)).